The primary structure comprises 199 residues: Oligoribonuclease (199 aa).

The 166-residue stretch at 5-170 (LVWIDCEMTG…ADIRESIREL (166 aa)) folds into the Exonuclease domain. The active site involves Tyr-127.

Belongs to the oligoribonuclease family.

It is found in the cytoplasm. Functionally, 3'-to-5' exoribonuclease specific for small oligoribonucleotides. This chain is Oligoribonuclease, found in Rhodococcus jostii (strain RHA1).